The following is a 798-amino-acid chain: Glycogen phosphorylase (798 aa).

At K646 the chain carries N6-(pyridoxal phosphate)lysine.

The protein belongs to the glycogen phosphorylase family. Requires pyridoxal 5'-phosphate as cofactor.

The enzyme catalyses [(1-&gt;4)-alpha-D-glucosyl](n) + phosphate = [(1-&gt;4)-alpha-D-glucosyl](n-1) + alpha-D-glucose 1-phosphate. In terms of biological role, phosphorylase is an important allosteric enzyme in carbohydrate metabolism. Enzymes from different sources differ in their regulatory mechanisms and in their natural substrates. However, all known phosphorylases share catalytic and structural properties. This chain is Glycogen phosphorylase (glgP), found in Bacillus subtilis (strain 168).